The sequence spans 564 residues: CTP synthase (564 aa).

Residues 1–265 (MTKFVFVTGG…DEIVCHRLDI (265 aa)) are amidoligase domain. A CTP-binding site is contributed by Ser13. Ser13 lines the UTP pocket. ATP is bound by residues 14-19 (SLGKGI) and Asp71. The Mg(2+) site is built by Asp71 and Glu139. Residues 146-148 (DIE), 186-191 (KTKPTQ), and Lys222 contribute to the CTP site. UTP-binding positions include 186 to 191 (KTKPTQ) and Lys222. A Glutamine amidotransferase type-1 domain is found at 290–543 (SIALVGKYVD…IQAAISFAGQ (254 aa)). Gly351 contacts L-glutamine. Cys378 (nucleophile; for glutamine hydrolysis) is an active-site residue. Residues 379–382 (LGMQ), Glu402, and Arg469 each bind L-glutamine. Catalysis depends on residues His516 and Glu518.

This sequence belongs to the CTP synthase family. As to quaternary structure, homotetramer.

The catalysed reaction is UTP + L-glutamine + ATP + H2O = CTP + L-glutamate + ADP + phosphate + 2 H(+). It carries out the reaction L-glutamine + H2O = L-glutamate + NH4(+). The enzyme catalyses UTP + NH4(+) + ATP = CTP + ADP + phosphate + 2 H(+). The protein operates within pyrimidine metabolism; CTP biosynthesis via de novo pathway; CTP from UDP: step 2/2. Its activity is regulated as follows. Allosterically activated by GTP, when glutamine is the substrate; GTP has no effect on the reaction when ammonia is the substrate. The allosteric effector GTP functions by stabilizing the protein conformation that binds the tetrahedral intermediate(s) formed during glutamine hydrolysis. Inhibited by the product CTP, via allosteric rather than competitive inhibition. Functionally, catalyzes the ATP-dependent amination of UTP to CTP with either L-glutamine or ammonia as the source of nitrogen. Regulates intracellular CTP levels through interactions with the four ribonucleotide triphosphates. The polypeptide is CTP synthase (Nitrosomonas europaea (strain ATCC 19718 / CIP 103999 / KCTC 2705 / NBRC 14298)).